The following is a 514-amino-acid chain: Phospholipase C D (514 aa).

The segment at residues Met-1–Ala-37 is a signal peptide (tat-type signal). The interval Val-492 to Cys-514 is disordered.

The protein belongs to the bacterial phospholipase C family. Post-translationally, predicted to be exported by the Tat system. The position of the signal peptide cleavage has not been experimentally proven.

The protein resides in the secreted. Its subcellular location is the cell wall. The catalysed reaction is a 1,2-diacyl-sn-glycero-3-phosphocholine + H2O = phosphocholine + a 1,2-diacyl-sn-glycerol + H(+). In terms of biological role, involved in virulence. Induces cytotoxic effects on mouse macrophage cell lines, via direct or indirect enzymatic hydrolysis of cell membrane phospholipids. Hydrolyzes phosphatidylcholine. This Mycobacterium tuberculosis (strain CDC 1551 / Oshkosh) protein is Phospholipase C D.